Here is a 339-residue protein sequence, read N- to C-terminus: Heat-inducible transcription repressor HrcA (339 aa).

Belongs to the HrcA family.

Functionally, negative regulator of class I heat shock genes (grpE-dnaK-dnaJ and groELS operons). Prevents heat-shock induction of these operons. This chain is Heat-inducible transcription repressor HrcA, found in Acidothermus cellulolyticus (strain ATCC 43068 / DSM 8971 / 11B).